The primary structure comprises 259 residues: 3-deoxy-manno-octulosonate cytidylyltransferase (259 aa).

It belongs to the KdsB family.

It is found in the cytoplasm. The catalysed reaction is 3-deoxy-alpha-D-manno-oct-2-ulosonate + CTP = CMP-3-deoxy-beta-D-manno-octulosonate + diphosphate. Its pathway is nucleotide-sugar biosynthesis; CMP-3-deoxy-D-manno-octulosonate biosynthesis; CMP-3-deoxy-D-manno-octulosonate from 3-deoxy-D-manno-octulosonate and CTP: step 1/1. The protein operates within bacterial outer membrane biogenesis; lipopolysaccharide biosynthesis. Its function is as follows. Activates KDO (a required 8-carbon sugar) for incorporation into bacterial lipopolysaccharide in Gram-negative bacteria. This Xanthomonas euvesicatoria pv. vesicatoria (strain 85-10) (Xanthomonas campestris pv. vesicatoria) protein is 3-deoxy-manno-octulosonate cytidylyltransferase.